Reading from the N-terminus, the 119-residue chain is Putative transmembrane protein ORF119 (119 aa).

The next 3 membrane-spanning stretches (helical) occupy residues 9–29 (TLAI…PAMV), 73–93 (QYAG…SIFT), and 95–115 (PIAL…AFYY).

It is found in the host membrane. The polypeptide is Putative transmembrane protein ORF119 (Acidianus convivator (ATV)).